The sequence spans 464 residues: Keratin, type I cytoskeletal 28 (464 aa).

The tract at residues 1 to 85 (MSLRFSSGSR…GSEGGLFSGN (85 aa)) is head. Positions 86–121 (EKVTMQNLNDRLASYLDNVRALEEANAELERKIKSW) are coil 1A. In terms of domain architecture, IF rod spans 86 to 401 (EKVTMQNLND…RLIDGDRNSC (316 aa)). Residues 122–143 (YEKHGPGSCHGLDHDYSRYHLT) form a linker 1 region. The segment at 144 to 235 (IEDLKNKIIS…KNHEEEVKAL (92 aa)) is coil 1B. Positions 236 to 258 (QCVAGGNVNVEMNAAPGVDLTLL) are linker 12. The segment at 259-397 (LNNMRAEYED…ETYCRLIDGD (139 aa)) is coil 2. The tail stretch occupies residues 398 to 464 (RNSCSKSKGF…NGKTKQRVPF (67 aa)). The segment covering 402–417 (SKSKGFGSGSPGNSSK) has biased composition (low complexity). Disordered regions lie at residues 402 to 422 (SKSK…LSRT) and 440 to 464 (SSRV…RVPF).

Belongs to the intermediate filament family. Heterotetramer of two type I and two type II keratins.

The protein localises to the cytoplasm. Functionally, essential for the proper assembly of types I and II keratin protein complexes and the formation of keratin intermediate filaments in the inner root sheath (irs). The chain is Keratin, type I cytoskeletal 28 from Bos taurus (Bovine).